Here is a 487-residue protein sequence, read N- to C-terminus: Protein DETOXIFICATION 11 (487 aa).

12 helical membrane-spanning segments follow: residues 35-55, 73-93, 122-142, 151-171, 184-204, 211-231, 264-284, 293-313, 330-350, 377-397, 412-432, and 435-455; these read LICF…LQII, FAIS…SCAL, LVCL…VILG, AGRF…LQPL, LLIT…LLVY, IGGA…LGSF, AAML…SGLL, VLSV…AIAA, AAHI…LMVG, MAPL…LSGV, FGAF…WVHL, and VGLW…LALV.

This sequence belongs to the multi antimicrobial extrusion (MATE) (TC 2.A.66.1) family.

Its subcellular location is the membrane. This is Protein DETOXIFICATION 11 from Arabidopsis thaliana (Mouse-ear cress).